We begin with the raw amino-acid sequence, 577 residues long: Type I restriction enzyme MjaVII methylase subunit (577 aa).

Residues 251-256 (EVYTPV), 281-283 (SGT), E306, and 335-336 (DS) each bind S-adenosyl-L-methionine.

The protein belongs to the N4/N6-methyltransferase family. In terms of assembly, the type I restriction/modification system is composed of three polypeptides R, M and S.

The catalysed reaction is a 2'-deoxyadenosine in DNA + S-adenosyl-L-methionine = an N(6)-methyl-2'-deoxyadenosine in DNA + S-adenosyl-L-homocysteine + H(+). The subtype gamma methyltransferase (M) subunit of a type I restriction enzyme. The M and S subunits together form a methyltransferase (MTase) that methylates A-3 on the top and bottom strands of the sequence 5'-CAAN(7)TGG-3'. In the presence of the R subunit the complex can also act as an endonuclease, binding to the same target sequence but cutting the DNA some distance from this site. Whether the DNA is cut or modified depends on the methylation state of the target sequence. When the target site is unmodified, the DNA is cut. When the target site is hemimethylated, the complex acts as a maintenance MTase modifying the DNA so that both strands become methylated. After locating a non-methylated recognition site, the enzyme complex serves as a molecular motor that translocates DNA in an ATP-dependent manner until a collision occurs that triggers cleavage. The polypeptide is Type I restriction enzyme MjaVII methylase subunit (Methanocaldococcus jannaschii (strain ATCC 43067 / DSM 2661 / JAL-1 / JCM 10045 / NBRC 100440) (Methanococcus jannaschii)).